A 264-amino-acid polypeptide reads, in one-letter code: S-adenosylmethionine decarboxylase proenzyme (264 aa).

The Schiff-base intermediate with substrate; via pyruvic acid role is filled by S113. S113 carries the post-translational modification Pyruvic acid (Ser); by autocatalysis. Catalysis depends on H118, which acts as the Proton acceptor; for processing activity. Catalysis depends on C141, which acts as the Proton donor; for catalytic activity.

It belongs to the prokaryotic AdoMetDC family. Type 2 subfamily. As to quaternary structure, heterooctamer of four alpha and four beta chains arranged as a tetramer of alpha/beta heterodimers. It depends on pyruvate as a cofactor. In terms of processing, is synthesized initially as an inactive proenzyme. Formation of the active enzyme involves a self-maturation process in which the active site pyruvoyl group is generated from an internal serine residue via an autocatalytic post-translational modification. Two non-identical subunits are generated from the proenzyme in this reaction, and the pyruvate is formed at the N-terminus of the alpha chain, which is derived from the carboxyl end of the proenzyme. The post-translation cleavage follows an unusual pathway, termed non-hydrolytic serinolysis, in which the side chain hydroxyl group of the serine supplies its oxygen atom to form the C-terminus of the beta chain, while the remainder of the serine residue undergoes an oxidative deamination to produce ammonia and the pyruvoyl group blocking the N-terminus of the alpha chain.

It carries out the reaction S-adenosyl-L-methionine + H(+) = S-adenosyl 3-(methylsulfanyl)propylamine + CO2. The protein operates within amine and polyamine biosynthesis; S-adenosylmethioninamine biosynthesis; S-adenosylmethioninamine from S-adenosyl-L-methionine: step 1/1. In terms of biological role, catalyzes the decarboxylation of S-adenosylmethionine to S-adenosylmethioninamine (dcAdoMet), the propylamine donor required for the synthesis of the polyamines spermine and spermidine from the diamine putrescine. This Pseudomonas syringae pv. syringae (strain B728a) protein is S-adenosylmethionine decarboxylase proenzyme.